The primary structure comprises 414 residues: Serine/threonine transporter SstT (414 aa).

Helical transmembrane passes span 16-36 (GSLV…AWVS), 46-66 (LGTL…LMLV), 84-104 (ILFL…VFSF), 143-163 (ALLN…GFAL), 180-200 (AVTF…FGLV), 219-239 (LVVL…LLVF), 300-320 (MAGA…TLGV), and 332-352 (VVAS…LLLI).

This sequence belongs to the dicarboxylate/amino acid:cation symporter (DAACS) (TC 2.A.23) family.

It localises to the cell inner membrane. The catalysed reaction is L-serine(in) + Na(+)(in) = L-serine(out) + Na(+)(out). It carries out the reaction L-threonine(in) + Na(+)(in) = L-threonine(out) + Na(+)(out). In terms of biological role, involved in the import of serine and threonine into the cell, with the concomitant import of sodium (symport system). The sequence is that of Serine/threonine transporter SstT from Salmonella arizonae (strain ATCC BAA-731 / CDC346-86 / RSK2980).